We begin with the raw amino-acid sequence, 202 residues long: Putative chromophore lyase CpcV (202 aa).

It belongs to the CpcS/CpeS biliprotein lyase family.

Functionally, covalently attaches a chromophore to Cys residue(s) of phycobiliproteins. The protein is Putative chromophore lyase CpcV (cpcV) of Picosynechococcus sp. (strain ATCC 27264 / PCC 7002 / PR-6) (Agmenellum quadruplicatum).